The following is a 539-amino-acid chain: Tripartite motif-containing protein 26 (539 aa).

Residues 16–57 (CSICLDYLRDPVTIDCGHVFCRSCTTDVRPISGSRPVCPLCK) form an RING-type zinc finger. The B box-type zinc-finger motif lies at 97-138 (QDAKLCERHREKLHYYCEDDGKLLCVMCRESREHRPHTAVLM). Zn(2+)-binding residues include Cys-102, His-105, Cys-124, and His-130. The stretch at 188 to 227 (IVAEFEQGHQFLREREEHLLEQLAKLEQELTEGREKFKSR) forms a coiled coil. Residues 295–539 (RGLREFQGKL…WPGTRLLLRP (245 aa)) enclose the B30.2/SPRY domain. The tract at residues 376-437 (REGWSEDEEE…EEEEEVLESC (62 aa)) is disordered. A compositionally biased stretch (acidic residues) spans 380 to 434 (SEDEEEGDEEEEGEEEEEEEEAGYGDGYDDWETDEDEESLGDEEEEEEEEEEEVL).

It belongs to the TRIM/RBCC family. In terms of assembly, interacts with TBK1; this interaction bridges together TBK1 and NEMO in order to activate TBK1. Interacts with INCA1. Autoubiquitinates upon viral infection. In turn, autoubiquitinated TRIM26 recruits NEMO and bridges TBK1-NEMO interaction.

The protein resides in the cytoplasm. Its subcellular location is the nucleus. It carries out the reaction S-ubiquitinyl-[E2 ubiquitin-conjugating enzyme]-L-cysteine + [acceptor protein]-L-lysine = [E2 ubiquitin-conjugating enzyme]-L-cysteine + N(6)-ubiquitinyl-[acceptor protein]-L-lysine.. Functionally, E3 ubiquitin-protein ligase which regulates the IFN-beta production and antiviral response downstream of various DNA-encoded pattern-recognition receptors (PRRs). Also plays a central role in determining the response to different forms of oxidative stress by controlling levels of DNA glycosylases NEIL1, NEIL3 and NTH1 that are involved in repair of damaged DNA. Promotes nuclear IRF3 ubiquitination and proteasomal degradation. Bridges together TBK1 and NEMO during the innate response to viral infection leading to the activation of TBK1. Positively regulates LPS-mediated inflammatory innate immune response by catalyzing the 'Lys-11'-linked polyubiquitination of TAB1 to enhance its activation and subsequent NF-kappa-B and MAPK signaling. In a manner independent of its catalytic activity, inhibits WWP2, a SOX2-directed E3 ubiquitin ligase, and thus protects SOX2 from polyubiquitination and proteasomal degradation. Ubiquitinates the histone acetyltransferase protein complex component PHF20 and thereby triggers its degradation in the nucleus after its recruitment by the histone demethylase KDM6B, serving as a scaffold protein. Upon induction by TGF-beta, ubiquitinates the TFIID component TAF7 for proteasomal degradation. Induces ferroptosis by ubiquitinating SLC7A11, a critical protein for lipid reactive oxygen species (ROS) scavenging. Inhibits directly hepatitis B virus replication by mediating HBX ubiquitination and subsequent degradation. Its function is as follows. (Microbial infection) Promotes herpes simplex virus type 2/HHV-2 infection in vaginal epithelial cells by decreasing the nuclear localization of IRF3, the primary mediator of type I interferon activation. In Homo sapiens (Human), this protein is Tripartite motif-containing protein 26 (TRIM26).